A 685-amino-acid polypeptide reads, in one-letter code: Serotransferrin (685 aa).

An N-terminal signal peptide occupies residues 1-16 (MKPLLLLPLLGCLATI). 2 consecutive Transferrin-like domains span residues 23–329 (VKWC…ALKI) and 340–666 (MKWC…SLRT). C26 and C48 are joined by a disulfide. Fe(3+)-binding residues include D72 and Y102. Disulfide bonds link C125-C206, C170-C184, and C234-C248. Hydrogencarbonate-binding residues include T127, K131, A133, and G134. Y200 contributes to the Fe(3+) binding site. H256 contacts Fe(3+). Disulfide bonds link C343–C379 and C353–C370. Positions 394 and 428 each coordinate Fe(3+). Cystine bridges form between C404–C678, C419–C639, C451–C526, C475–C667, C485–C499, C496–C509, and C566–C580. Residues T453, R457, A459, and G460 each contribute to the hydrogencarbonate site. N476 is a glycosylation site (N-linked (GlcNAc...) asparagine). Y520 provides a ligand contact to Fe(3+). Position 588 (H588) interacts with Fe(3+).

Belongs to the transferrin family. As to quaternary structure, monomer.

The protein resides in the secreted. Its function is as follows. Transferrins are iron binding transport proteins which can bind two Fe(3+) ions in association with the binding of an anion, usually bicarbonate. The sequence is that of Serotransferrin (tf) from Paralichthys olivaceus (Bastard halibut).